Here is a 131-residue protein sequence, read N- to C-terminus: Global transcriptional regulator Spx (131 aa).

A disulfide bridge connects residues C10 and C13.

It belongs to the ArsC family. Spx subfamily. As to quaternary structure, interacts with the C-terminal domain of the alpha subunit of the RNAP.

It is found in the cytoplasm. Global transcriptional regulator that plays a key role in stress response and exerts either positive or negative regulation of genes. Acts by interacting with the C-terminal domain of the alpha subunit of the RNA polymerase (RNAP). This interaction can enhance binding of RNAP to the promoter region of target genes and stimulate their transcription, or block interaction of RNAP with activator. The polypeptide is Global transcriptional regulator Spx (Staphylococcus epidermidis (strain ATCC 35984 / DSM 28319 / BCRC 17069 / CCUG 31568 / BM 3577 / RP62A)).